A 347-amino-acid chain; its full sequence is NADH-ubiquinone oxidoreductase chain 2 (347 aa).

10 helical membrane passes run Pro3 to Ser23, Trp26 to Met46, Ser67 to Met87, Tyr96 to Pro116, Leu149 to Gly169, Ile178 to Thr198, Leu200 to Ile220, Ile239 to Gly259, Asn274 to Met294, and Leu325 to Ile345.

This sequence belongs to the complex I subunit 2 family. Core subunit of respiratory chain NADH dehydrogenase (Complex I) which is composed of 45 different subunits. Interacts with TMEM242.

The protein resides in the mitochondrion inner membrane. The enzyme catalyses a ubiquinone + NADH + 5 H(+)(in) = a ubiquinol + NAD(+) + 4 H(+)(out). Functionally, core subunit of the mitochondrial membrane respiratory chain NADH dehydrogenase (Complex I) which catalyzes electron transfer from NADH through the respiratory chain, using ubiquinone as an electron acceptor. Essential for the catalytic activity and assembly of complex I. This chain is NADH-ubiquinone oxidoreductase chain 2, found in Dasypus novemcinctus (Nine-banded armadillo).